Reading from the N-terminus, the 123-residue chain is UPF0102 protein Cbei_1183 (123 aa).

Belongs to the UPF0102 family.

The protein is UPF0102 protein Cbei_1183 of Clostridium beijerinckii (strain ATCC 51743 / NCIMB 8052) (Clostridium acetobutylicum).